Reading from the N-terminus, the 529-residue chain is Probable feruloyl esterase B-1 (529 aa).

The signal sequence occupies residues 1–19; that stretch reads MKISYFFVASLSYVSVARA. 2 cysteine pairs are disulfide-bonded: Cys27–Cys75 and Cys63–Cys114. N-linked (GlcNAc...) asparagine glycosylation is found at Asn53, Asn64, Asn85, Asn98, and Asn138. 4 disulfide bridges follow: Cys187/Cys445, Cys256/Cys273, Cys282/Cys295, and Cys505/Cys527. Ser188 serves as the catalytic Acyl-ester intermediate. N-linked (GlcNAc...) asparagine glycosylation is present at Asn233. Positions 257, 260, 262, 264, and 266 each coordinate Ca(2+). N-linked (GlcNAc...) asparagine glycans are attached at residues Asn286, Asn290, and Asn354. Residues Asp404 and His444 each act as charge relay system in the active site.

Belongs to the tannase family.

It is found in the secreted. It carries out the reaction feruloyl-polysaccharide + H2O = ferulate + polysaccharide.. Involved in degradation of plant cell walls. Hydrolyzes the feruloyl-arabinose ester bond in arabinoxylans as well as the feruloyl-galactose and feruloyl-arabinose ester bonds in pectin. In Aspergillus terreus (strain NIH 2624 / FGSC A1156), this protein is Probable feruloyl esterase B-1 (faeB-1).